We begin with the raw amino-acid sequence, 336 residues long: MDCGMENCNGGISNGDVLGKHEKLIIDTDPGIDDSMAILMAFQTPELEILGLTTVFGNVSTQDATRNALLLCEIAGFPDVPVAEGSSEPLKGGIPRVADFVHGKNGLGDVSLPPPSRKKSEKSAAEFLDEKVEEYPGEVTILALGPLTNLALAIKRDSSFASKVKKIVILGGAFFSLGNVNPAAEANIYGDPEAADVVFTSGADITVVGINITTQLKLSDDDLLELGNCKGKHSKLISDMCKFYRDWHVKSDGVYGVYLHDPVSFVAVVRPDLFTYKKGVVRVETQGICVGHTLMDQGLKRWNGSNPWVGYSPISVAWTVDVEGVLEYVKAKLMKP.

Catalysis depends on residues aspartate 29 and histidine 260.

Belongs to the IUNH family. In terms of assembly, homodimer. Component of the NSH heterocomplex made of URH1/NSH1 and URH2/NSH2 which exhibits strong xanthosine nucleosidase activity. Interacts with URH2. In terms of tissue distribution, expressed ubiquitously in leaves, flowers, stems, pollen cells, root tip meristem and root vasculature.

The protein localises to the cytoplasm. It carries out the reaction uridine + H2O = D-ribose + uracil. It catalyses the reaction xanthosine + H2O = D-ribose + xanthine. The enzyme catalyses inosine + H2O = hypoxanthine + D-ribose. The catalysed reaction is adenosine + H2O = D-ribose + adenine. Involved in purine and pyrimidine breakdown rather than in pyrimidine salvage, especially in response to dark stress. Together with URH2, required for efficient inosine and xanthosine hydrolytic activities. Unable to use cytidine as a substrate. Can use uridine, inosine, adenosine as well as the cytokinin derivative isopentenyladenine-riboside as substrates. Also hydrolyzes xanthosine with high efficiency. The chain is Uridine nucleosidase 1 from Arabidopsis thaliana (Mouse-ear cress).